The primary structure comprises 117 residues: Large ribosomal subunit protein bL19 (117 aa).

The protein belongs to the bacterial ribosomal protein bL19 family.

This protein is located at the 30S-50S ribosomal subunit interface and may play a role in the structure and function of the aminoacyl-tRNA binding site. The protein is Large ribosomal subunit protein bL19 of Desulfosudis oleivorans (strain DSM 6200 / JCM 39069 / Hxd3) (Desulfococcus oleovorans).